The chain runs to 359 residues: Peptide chain release factor 1 (359 aa).

An N5-methylglutamine modification is found at glutamine 235.

It belongs to the prokaryotic/mitochondrial release factor family. Post-translationally, methylated by PrmC. Methylation increases the termination efficiency of RF1.

The protein resides in the cytoplasm. Functionally, peptide chain release factor 1 directs the termination of translation in response to the peptide chain termination codons UAG and UAA. The sequence is that of Peptide chain release factor 1 from Aromatoleum aromaticum (strain DSM 19018 / LMG 30748 / EbN1) (Azoarcus sp. (strain EbN1)).